Consider the following 1144-residue polypeptide: Adenylate cyclase type 3 (1144 aa).

The Cytoplasmic portion of the chain corresponds to 1 to 79; the sequence is MTEDQGFSDP…FKRQRHETLL (79 aa). Transmembrane regions (helical) follow at residues 80–100, 105–125, 139–159, 173–193, and 226–246; these read VLVVFAALFDCYVVVMCAVVF, LAPLMVAGVGLVLDIILFVLC, VPYLLWLLITAQIFSYLGLNF, AFFVFSFFITLPLSLSPIVII, and ILANVFLYLCAIIVGIMSYYM. Residues aspartate 324, isoleucine 325, and aspartate 368 each contribute to the Mg(2+) site. ATP-binding positions include 324–329 and 366–368; these read DIVGFT and LGD. Residues 381 to 401 form a helical membrane-spanning segment; that stretch reads EDHAVCSILMGLAMVEAISYV. At 402-630 the chain is on the cytoplasmic side; sequence REKTKTGVDM…RYSVEKEKQS (229 aa). Arginine 412 contributes to the ATP binding site. Residue lysine 465 forms a Glycyl lysine isopeptide (Lys-Gly) (interchain with G-Cter in SUMO3) linkage. Residues 504 to 563 are disordered; sequence QNGLNGSALPNGAPASKPSSPALIETKEPNGSAHASGSTSEEAEEQEAQADNPSFPNPRR. Serine 523 carries the phosphoserine modification. Over residues 534–543 the composition is skewed to low complexity; sequence GSAHASGSTS. At serine 578 the chain carries Phosphoserine. A run of 3 helical transmembrane segments spans residues 631 to 651, 662 to 682, and 706 to 726; these read GAAFSCSCVVLFCTAMVEILI, FVVGEVLLLILTICSMAAIFP, and WAMLAIFILVMANVVDMLSCL. N-linked (GlcNAc...) asparagine glycosylation is present at asparagine 734. Helical transmembrane passes span 755–775, 777–797, and 833–853; these read VAVLSLIATIMLVQVSHMVKL, LMLLVTGAVTAINLYAWCPVF, and LPLVPSKYSMTVMMFVMMLSF. The Cytoplasmic portion of the chain corresponds to 854-1144; it reads YYFSRHVEKL…TLPHQVVDNP (291 aa). Residues lysine 975, 1062–1064, and 1069–1073 contribute to the ATP site; these read DIW and NVASR. Serine 1076 is subject to Phosphoserine; by CaMK2. Lysine 1109 is a binding site for ATP.

It belongs to the adenylyl cyclase class-4/guanylyl cyclase family. It depends on Mg(2+) as a cofactor. Mn(2+) serves as cofactor. N-glycosylated. In terms of processing, sumoylated. Sumoylation is required for targeting ot olfactory cilia. Post-translationally, rapidly phosphorylated after stimulation by odorants or forskolin. Phosphorylation by CaMK2 at Ser-1076 down-regulates enzyme activity. As to expression, detected on cilia on the olfactory epithelium (at protein level). Detected on cilia on the olfactory epithelium.

It is found in the cell membrane. Its subcellular location is the golgi apparatus. The protein resides in the cell projection. It localises to the cilium. The protein localises to the cytoplasm. It catalyses the reaction ATP = 3',5'-cyclic AMP + diphosphate. Its activity is regulated as follows. Specifically activated by the G alpha protein GNAL/G(olf) in signaling cascades triggered by odorant receptors. Activated by forskolin. After forskolin treatment, activity is further increased by calcium/calmodulin. In the absence of forskolin, calcium/calmodulin has little effect on enzyme activity. Catalyzes the formation of the signaling molecule cAMP in response to G-protein signaling. Participates in signaling cascades triggered by odorant receptors via its function in cAMP biosynthesis: specifically activated by G alpha protein GNAL/G(olf) in olfactory epithelium. Required for the perception of odorants. Required for normal sperm motility and normal male fertility. Plays a role in regulating insulin levels and body fat accumulation in response to a high fat diet. The polypeptide is Adenylate cyclase type 3 (Rattus norvegicus (Rat)).